Consider the following 573-residue polypeptide: Arylsulfatase I (573 aa).

The N-terminal stretch at 1 to 23 (MHALSGFSLVSLLSLGYLSWDWA) is a signal peptide. Ca(2+) contacts are provided by Asp-55, Asp-56, and Cys-93. Cys-93 (nucleophile) is an active-site residue. Cys-93 bears the 3-oxoalanine (Cys) mark. Lys-147 lines the substrate pocket. His-149 is a catalytic residue. His-239 lines the substrate pocket. 2 N-linked (GlcNAc...) asparagine glycosylation sites follow: Asn-276 and Asn-288. 2 residues coordinate Ca(2+): Asp-297 and Asn-298. Position 315 (Lys-315) interacts with substrate. Asn-466 and Asn-496 each carry an N-linked (GlcNAc...) asparagine glycan. Residues 506 to 550 (AANPRAHPDFNGGAWGPWASDEDEEEEDEEEEGRARSFPRGRRKK) form a disordered region. The segment covering 525–537 (SDEDEEEEDEEEE) has biased composition (acidic residues).

It belongs to the sulfatase family. Ca(2+) serves as cofactor. In terms of processing, the oxidation of Cys-93 residue to 3-oxoalanine (also known as C(alpha)-formylglycine) by SUMF1/Sulfatase-modifying factor 1, seems critical for catalytic activity.

It localises to the secreted. It is found in the endoplasmic reticulum. Its function is as follows. Displays arylsulfatase activity at neutral pH, when co-expressed with SUMF1; arylsulfatase activity is measured in the secretion medium of retinal cell line, but no activity is recorded when measured in cell extracts. The chain is Arylsulfatase I (Arsi) from Rattus norvegicus (Rat).